Consider the following 367-residue polypeptide: Germination protease (367 aa).

A propeptide spanning residues 1 to 15 (MKEPLDLSKYAVRTD) is cleaved from the precursor.

The protein belongs to the peptidase A25 family. Homotetramer. Post-translationally, autoproteolytically processed. The inactive tetrameric zymogen termed p46 autoprocesses to a smaller form termed p41, which is active only during spore germination.

It carries out the reaction Endopeptidase action with P4 Glu or Asp, P1 preferably Glu &gt; Asp, P1' hydrophobic and P2' Ala.. Initiates the rapid degradation of small, acid-soluble proteins during spore germination. This chain is Germination protease, found in Bacillus cytotoxicus (strain DSM 22905 / CIP 110041 / 391-98 / NVH 391-98).